The following is a 443-amino-acid chain: ATP-dependent protease ATPase subunit HslU (443 aa).

Residues Ile-18 and 60–65 each bind ATP; that span reads GVGKTE. Residues 139–161 are disordered; it reads ARDSGFDANPSEENNATRQKFRK. Positions 256, 321, and 393 each coordinate ATP.

The protein belongs to the ClpX chaperone family. HslU subfamily. In terms of assembly, a double ring-shaped homohexamer of HslV is capped on each side by a ring-shaped HslU homohexamer. The assembly of the HslU/HslV complex is dependent on binding of ATP.

It is found in the cytoplasm. Functionally, ATPase subunit of a proteasome-like degradation complex; this subunit has chaperone activity. The binding of ATP and its subsequent hydrolysis by HslU are essential for unfolding of protein substrates subsequently hydrolyzed by HslV. HslU recognizes the N-terminal part of its protein substrates and unfolds these before they are guided to HslV for hydrolysis. The polypeptide is ATP-dependent protease ATPase subunit HslU (Nitrosomonas eutropha (strain DSM 101675 / C91 / Nm57)).